A 121-amino-acid polypeptide reads, in one-letter code: NADH-quinone oxidoreductase subunit A (121 aa).

Transmembrane regions (helical) follow at residues 8–28 (YLPI…TIIG), 65–85 (LVAI…PWAI), and 93–113 (QGMI…FYII).

It belongs to the complex I subunit 3 family. As to quaternary structure, NDH-1 is composed of 14 different subunits. Subunits NuoA, H, J, K, L, M, N constitute the membrane sector of the complex.

It is found in the cell inner membrane. It catalyses the reaction a quinone + NADH + 5 H(+)(in) = a quinol + NAD(+) + 4 H(+)(out). Functionally, NDH-1 shuttles electrons from NADH, via FMN and iron-sulfur (Fe-S) centers, to quinones in the respiratory chain. The immediate electron acceptor for the enzyme in this species is believed to be a menaquinone. Couples the redox reaction to proton translocation (for every two electrons transferred, four hydrogen ions are translocated across the cytoplasmic membrane), and thus conserves the redox energy in a proton gradient. The chain is NADH-quinone oxidoreductase subunit A from Flavobacterium psychrophilum (strain ATCC 49511 / DSM 21280 / CIP 103535 / JIP02/86).